Consider the following 165-residue polypeptide: Chorismate pyruvate-lyase (165 aa).

Positions 77, 115, and 156 each coordinate substrate.

Belongs to the UbiC family. In terms of assembly, monomer.

The protein localises to the cytoplasm. The catalysed reaction is chorismate = 4-hydroxybenzoate + pyruvate. The protein operates within cofactor biosynthesis; ubiquinone biosynthesis. Removes the pyruvyl group from chorismate, with concomitant aromatization of the ring, to provide 4-hydroxybenzoate (4HB) for the ubiquinone pathway. The sequence is that of Chorismate pyruvate-lyase from Salmonella typhi.